A 535-amino-acid polypeptide reads, in one-letter code: Dimethylaniline monooxygenase [N-oxide-forming] 2 (535 aa).

Ala-2 is subject to N-acetylalanine. FAD-binding positions include 9–13 (GAGVS), Glu-32, 40–41 (LW), and 61–62 (NT). Residues 60–61 (TN) and 195–198 (SASD) each bind NADP(+). Residue Lys-492 forms a Glycyl lysine isopeptide (Lys-Gly) (interchain with G-Cter in SUMO) linkage. Residues 510–530 (FPVSFLLKFLGLFALVLAFLF) traverse the membrane as a helical segment.

This sequence belongs to the FMO family. It depends on FAD as a cofactor. Requires Mg(2+) as cofactor. In terms of tissue distribution, lung.

It localises to the microsome membrane. The protein localises to the endoplasmic reticulum membrane. It carries out the reaction N,N-dimethylaniline + NADPH + O2 + H(+) = N,N-dimethylaniline N-oxide + NADP(+) + H2O. Catalyzes the oxidative metabolism of numerous xenobiotics, including mainly therapeutic drugs and insecticides that contain a soft nucleophile, most commonly nitrogen and sulfur and participates to their bioactivation. Most drug substrates are tertiary amines such as prochlorperazine and trifluoperazine which are N-oxygenated to form the N-oxide, or sulfides such as thiourea and ethionamide, which are S-oxygenated to the sulfoxide. Others include primary alkylamines such as N-dodecylamine and octan-1-amine that are sequentially monooxygenated to oximes through intermediate hydroxylamines and both steps are NADPH- and oxygen-dependent. Also metabolized N-Deacetyl ketoconazole (DAK) to N-hydroxy-DAK and appears to further metabolizes N-hydroxy-DAK to two others metabolites. Also catalyzes S-oxygenation of the thioether-containing organophosphate insecticides, phorate and disulfoton. This chain is Dimethylaniline monooxygenase [N-oxide-forming] 2, found in Oryctolagus cuniculus (Rabbit).